The sequence spans 225 residues: C-reactive protein (225 aa).

An N-terminal signal peptide occupies residues 1-19 (MAKLLLYFLLLTSLSDVFG). Positions 24–225 (SKKTFVFPKE…EVFIKPQLWP (202 aa)) constitute a Pentraxin (PTX) domain. Residues Cys-55 and Cys-116 are joined by a disulfide bond. The Ca(2+) site is built by Asn-80, Gln-158, Asp-159, and Gln-169.

It belongs to the pentraxin family. In terms of assembly, homopentamer. Pentraxin (or pentaxin) have a discoid arrangement of 5 non-covalently bound subunits. Interacts with FCN1; may regulate monocyte activation by FCN1. Ca(2+) serves as cofactor. In terms of tissue distribution, found in plasma.

It localises to the secreted. Its function is as follows. Displays several functions associated with host defense: it promotes agglutination, bacterial capsular swelling, phagocytosis and complement fixation through its calcium-dependent binding to phosphorylcholine. Can interact with DNA and histones and may scavenge nuclear material released from damaged circulating cells. The polypeptide is C-reactive protein (CRP) (Cavia porcellus (Guinea pig)).